We begin with the raw amino-acid sequence, 323 residues long: Fructokinase-1 (323 aa).

This sequence belongs to the carbohydrate kinase PfkB family. Expressed in root, endosperm and leaf tissues.

The catalysed reaction is D-fructose + ATP = D-fructose 6-phosphate + ADP + H(+). It participates in glycan biosynthesis; starch biosynthesis. With respect to regulation, completely inhibited at 50 mM ATP, but not inhibited at high fructose concentration. Its function is as follows. Fructokinase that may play an important role in maintaining the flux of carbon towards starch formation. May also be involved in a sugar-sensing pathway. This chain is Fructokinase-1, found in Oryza sativa subsp. japonica (Rice).